A 1076-amino-acid polypeptide reads, in one-letter code: Regulator of G-protein signaling protein-like (1076 aa).

An RGS domain is found at 645 to 764; it reads NLTEVLLNTQ…LFPPHHQEVE (120 aa). Residues 834 to 852 are compositionally biased toward polar residues; the sequence is TTAHNTSGRSAPPSTNVRS. The disordered stretch occupies residues 834–854; the sequence is TTAHNTSGRSAPPSTNVRSAD. Residues 960–982 form a helical membrane-spanning segment; sequence VFHGAIMSVFPVVMYFWKRFCFW.

It is found in the membrane. The protein is Regulator of G-protein signaling protein-like (RGSL1) of Homo sapiens (Human).